The sequence spans 359 residues: MAAVRTPLSLWRFQLGSRRARRVCTRATAQRHPDALLATRPQPFEVGQPRRLLSSEAESGSSEVKKPAFMDEEVQRILTKITGLDLQKTFRPAIQPLKPPTYKLMTQAQLEEATRLAVEAAKVRLKMPPVLEERKPINDVLAEDKILEGTETNKYVFTDISYNIPHRERFIVVREPSGTLRKASWEERDRVIQIYFPKEGRRVLPPVIFKDENLKTMYSQDRHADVLNLCVAQFEPDSAEYIKVHHQTYEDIDRHGKYELLRSTRHFGGMAWYFVNKKKIDGLLIDQIQRDLVDDATSLVQLYHMLHPDGQSAQEAKEQAAEGVDLIKVFAKTEAQRGAYIELALQTYQEIVTSHSAAS.

Residues 40-65 (RPQPFEVGQPRRLLSSEAESGSSEVK) are disordered. Phosphoserine is present on S54. Position 210 is an N6-acetyllysine (K210).

This sequence belongs to the mitochondrion-specific ribosomal protein mS22 family. In terms of assembly, component of the mitochondrial ribosome small subunit (28S) which comprises a 12S rRNA and about 30 distinct proteins.

The protein localises to the mitochondrion. This is Small ribosomal subunit protein mS22 (Mrps22) from Mus musculus (Mouse).